A 183-amino-acid polypeptide reads, in one-letter code: ATP synthase subunit delta (183 aa).

Belongs to the ATPase delta chain family. In terms of assembly, F-type ATPases have 2 components, F(1) - the catalytic core - and F(0) - the membrane proton channel. F(1) has five subunits: alpha(3), beta(3), gamma(1), delta(1), epsilon(1). F(0) has three main subunits: a(1), b(2) and c(10-14). The alpha and beta chains form an alternating ring which encloses part of the gamma chain. F(1) is attached to F(0) by a central stalk formed by the gamma and epsilon chains, while a peripheral stalk is formed by the delta and b chains.

The protein localises to the cell inner membrane. F(1)F(0) ATP synthase produces ATP from ADP in the presence of a proton or sodium gradient. F-type ATPases consist of two structural domains, F(1) containing the extramembraneous catalytic core and F(0) containing the membrane proton channel, linked together by a central stalk and a peripheral stalk. During catalysis, ATP synthesis in the catalytic domain of F(1) is coupled via a rotary mechanism of the central stalk subunits to proton translocation. In terms of biological role, this protein is part of the stalk that links CF(0) to CF(1). It either transmits conformational changes from CF(0) to CF(1) or is implicated in proton conduction. The polypeptide is ATP synthase subunit delta (Solidesulfovibrio magneticus (strain ATCC 700980 / DSM 13731 / RS-1) (Desulfovibrio magneticus)).